Consider the following 182-residue polypeptide: Putative pre-16S rRNA nuclease (182 aa).

Belongs to the YqgF nuclease family.

The protein localises to the cytoplasm. Could be a nuclease involved in processing of the 5'-end of pre-16S rRNA. In Corynebacterium aurimucosum (strain ATCC 700975 / DSM 44827 / CIP 107346 / CN-1) (Corynebacterium nigricans), this protein is Putative pre-16S rRNA nuclease.